A 437-amino-acid chain; its full sequence is Protein WVD2-like 5 (437 aa).

Disordered regions lie at residues 1–22 (MDPE…GGLA), 38–210 (TVDT…FSFK), and 254–437 (LRKS…AVEH). A compositionally biased stretch (low complexity) spans 41–55 (TTSESQNENSANSST). Basic and acidic residues predominate over residues 58–86 (TIEHVKEAAEGTQVEHVDDSKCMKGEKAQ). Polar residues predominate over residues 121–140 (SNGSVAPNVQTTNPLKSKSF). The span at 151 to 167 (GKHDSAPAESADGEKVK) shows a compositional bias: basic and acidic residues. The residue at position 208 (serine 208) is a Phosphoserine. The segment covering 288-297 (KSPKLGRKKT) has biased composition (basic residues). The span at 360-371 (PAPAKAAIIPAK) shows a compositional bias: low complexity. Over residues 408–437 (EDSHETVSPRMNEDRADKSIEVSEAVAVEH) the composition is skewed to basic and acidic residues. Position 415 is a phosphoserine (serine 415).

This sequence belongs to the TPX2 family. In terms of tissue distribution, expressed in seedlings.

The protein localises to the cytoplasm. The protein resides in the cytoskeleton. Its function is as follows. Microtubule-associated protein (MAP) that regulates the orientation of interphase cortical microtubules. In Arabidopsis thaliana (Mouse-ear cress), this protein is Protein WVD2-like 5.